Consider the following 159-residue polypeptide: Ribosomal RNA large subunit methyltransferase H (159 aa).

Residues leucine 76, glycine 108, and 127-132 (FSKMTF) contribute to the S-adenosyl-L-methionine site.

The protein belongs to the RNA methyltransferase RlmH family. Homodimer.

The protein localises to the cytoplasm. It catalyses the reaction pseudouridine(1915) in 23S rRNA + S-adenosyl-L-methionine = N(3)-methylpseudouridine(1915) in 23S rRNA + S-adenosyl-L-homocysteine + H(+). Functionally, specifically methylates the pseudouridine at position 1915 (m3Psi1915) in 23S rRNA. The sequence is that of Ribosomal RNA large subunit methyltransferase H from Staphylococcus aureus (strain MSSA476).